The primary structure comprises 129 residues: Small ribosomal subunit protein uS11 (129 aa).

It belongs to the universal ribosomal protein uS11 family. In terms of assembly, part of the 30S ribosomal subunit. Interacts with proteins S7 and S18. Binds to IF-3.

Functionally, located on the platform of the 30S subunit, it bridges several disparate RNA helices of the 16S rRNA. Forms part of the Shine-Dalgarno cleft in the 70S ribosome. This chain is Small ribosomal subunit protein uS11, found in Allorhizobium ampelinum (strain ATCC BAA-846 / DSM 112012 / S4) (Agrobacterium vitis (strain S4)).